Reading from the N-terminus, the 216-residue chain is Octanoyltransferase (216 aa).

The BPL/LPL catalytic domain occupies 32–207; it reads PDSQDEIWLV…QLVKHLDYAE (176 aa). Residues 71–78, 138–140, and 151–153 each bind substrate; these read RGGQVTYH, SLG, and GLA. The Acyl-thioester intermediate role is filled by C169.

This sequence belongs to the LipB family.

The protein localises to the cytoplasm. The catalysed reaction is octanoyl-[ACP] + L-lysyl-[protein] = N(6)-octanoyl-L-lysyl-[protein] + holo-[ACP] + H(+). The protein operates within protein modification; protein lipoylation via endogenous pathway; protein N(6)-(lipoyl)lysine from octanoyl-[acyl-carrier-protein]: step 1/2. Functionally, catalyzes the transfer of endogenously produced octanoic acid from octanoyl-acyl-carrier-protein onto the lipoyl domains of lipoate-dependent enzymes. Lipoyl-ACP can also act as a substrate although octanoyl-ACP is likely to be the physiological substrate. The sequence is that of Octanoyltransferase from Pseudomonas putida (strain ATCC 47054 / DSM 6125 / CFBP 8728 / NCIMB 11950 / KT2440).